We begin with the raw amino-acid sequence, 405 residues long: Nicotinate phosphoribosyltransferase (405 aa).

The residue at position 224 (His224) is a Phosphohistidine; by autocatalysis.

The protein belongs to the NAPRTase family. Post-translationally, transiently phosphorylated on a His residue during the reaction cycle. Phosphorylation strongly increases the affinity for substrates and increases the rate of nicotinate D-ribonucleotide production. Dephosphorylation regenerates the low-affinity form of the enzyme, leading to product release.

It catalyses the reaction nicotinate + 5-phospho-alpha-D-ribose 1-diphosphate + ATP + H2O = nicotinate beta-D-ribonucleotide + ADP + phosphate + diphosphate. It functions in the pathway cofactor biosynthesis; NAD(+) biosynthesis; nicotinate D-ribonucleotide from nicotinate: step 1/1. Catalyzes the synthesis of beta-nicotinate D-ribonucleotide from nicotinate and 5-phospho-D-ribose 1-phosphate at the expense of ATP. This is Nicotinate phosphoribosyltransferase from Methanococcoides burtonii (strain DSM 6242 / NBRC 107633 / OCM 468 / ACE-M).